Here is a 732-residue protein sequence, read N- to C-terminus: Inducible ornithine decarboxylase (732 aa).

K355 is subject to N6-(pyridoxal phosphate)lysine.

The protein belongs to the Orn/Lys/Arg decarboxylase class-I family. The cofactor is pyridoxal 5'-phosphate.

It carries out the reaction L-ornithine + H(+) = putrescine + CO2. The protein operates within amine and polyamine biosynthesis; putrescine biosynthesis via L-ornithine pathway; putrescine from L-ornithine: step 1/1. The first enzyme leading to putrescine and thus polyamine synthesis. In Escherichia coli (strain K12), this protein is Inducible ornithine decarboxylase.